Reading from the N-terminus, the 57-residue chain is Potassium channel toxin alpha-KTx 8.7 (57 aa).

Residues 1–28 (MSRLYAIILIALVFNVIMTIMPDMKVEA) form the signal peptide. 3 disulfides stabilise this stretch: cysteine 31–cysteine 47, cysteine 34–cysteine 52, and cysteine 38–cysteine 54.

As to expression, expressed by the venom gland.

The protein resides in the secreted. Functionally, inhibits voltage-gated potassium channel rKv1.1/KCNA1 at nanomolar ranges (IC(50)=8.5 nM). This is Potassium channel toxin alpha-KTx 8.7 from Mesobuthus eupeus (Lesser Asian scorpion).